Consider the following 487-residue polypeptide: N-succinylglutamate 5-semialdehyde dehydrogenase (487 aa).

Gly-221–Gly-226 contributes to the NAD(+) binding site. Active-site residues include Glu-244 and Cys-278.

It belongs to the aldehyde dehydrogenase family. AstD subfamily.

The catalysed reaction is N-succinyl-L-glutamate 5-semialdehyde + NAD(+) + H2O = N-succinyl-L-glutamate + NADH + 2 H(+). It participates in amino-acid degradation; L-arginine degradation via AST pathway; L-glutamate and succinate from L-arginine: step 4/5. Functionally, catalyzes the NAD-dependent reduction of succinylglutamate semialdehyde into succinylglutamate. In Pseudomonas aeruginosa (strain ATCC 15692 / DSM 22644 / CIP 104116 / JCM 14847 / LMG 12228 / 1C / PRS 101 / PAO1), this protein is N-succinylglutamate 5-semialdehyde dehydrogenase (astD).